A 665-amino-acid chain; its full sequence is Chaperone protein dnaK1 (665 aa).

Position 198 is a phosphothreonine; by autocatalysis (Thr198). The tract at residues 634 to 665 (DDPWDNQMNSNSRNSRYGNSRDDDPWDNDYFL) is disordered. Over residues 642-651 (NSNSRNSRYG) the composition is skewed to low complexity.

It belongs to the heat shock protein 70 family.

Its function is as follows. Acts as a chaperone. The sequence is that of Chaperone protein dnaK1 (dnaK1) from Prochlorococcus marinus subsp. pastoris (strain CCMP1986 / NIES-2087 / MED4).